A 128-amino-acid chain; its full sequence is Large-conductance mechanosensitive channel (128 aa).

A run of 2 helical transmembrane segments spans residues 11–31 (FALKGNVLDLAVAVVIGAAFG) and 70–90 (GAFIQSIVDFVIIAFAIFIFV).

The protein belongs to the MscL family. Homopentamer.

The protein resides in the cell membrane. In terms of biological role, channel that opens in response to stretch forces in the membrane lipid bilayer. May participate in the regulation of osmotic pressure changes within the cell. In Listeria monocytogenes serotype 4b (strain CLIP80459), this protein is Large-conductance mechanosensitive channel.